Reading from the N-terminus, the 502-residue chain is Probable zinc metalloprotease MGG_02107 (502 aa).

An N-terminal signal peptide occupies residues 1–21 (MRSPPGAVAALASVAAQLATA). The Zn(2+) site is built by His182, Asp202, and Glu235. Asn250 is a glycosylation site (N-linked (GlcNAc...) asparagine). A Zn(2+)-binding site is contributed by Asp262. The interval 284–307 (QGGSPAGESKERAETRASIGGEND) is disordered. Asn375, Asn417, and Asn427 each carry an N-linked (GlcNAc...) asparagine glycan. Residues 414–502 (QVRNVTVDTS…KSPATMPFPG (89 aa)) form the Fibronectin type-III domain.

This sequence belongs to the peptidase M28 family. M28B subfamily. Zn(2+) serves as cofactor.

The protein localises to the secreted. This is Probable zinc metalloprotease MGG_02107 from Pyricularia oryzae (strain 70-15 / ATCC MYA-4617 / FGSC 8958) (Rice blast fungus).